Consider the following 288-residue polypeptide: Solute carrier family 25 member 45 (288 aa).

Solcar repeat units lie at residues 1–83 (MPVE…TLLV), 97–191 (PSYM…LCRQ), and 199–286 (PSSA…LLRW). The next 6 helical transmembrane spans lie at 6–26 (FVAGWISGALGLVLGHPFDTV), 63–83 (IASIAVVNSVLFGVYSNTLLV), 100–120 (MHIFLAGCTGGFLQAYCLAPF), 166–186 (GAWALTLRDTPTVGIYFITYE), 202–222 (ATVLVAGGFAGIASWVAATPL), and 266–286 (SARAFPVNAVTFLSYEYLLRW).

This sequence belongs to the mitochondrial carrier (TC 2.A.29) family.

It localises to the mitochondrion inner membrane. This Homo sapiens (Human) protein is Solute carrier family 25 member 45 (SLC25A45).